The following is a 150-amino-acid chain: Large ribosomal subunit protein uL16 (150 aa).

This sequence belongs to the universal ribosomal protein uL16 family. Component of the small ribosomal subunit. Mature ribosomes consist of a small (40S) and a large (60S) subunit. The 40S subunit contains about 33 different proteins and 1 molecule of RNA (18S). The 60S subunit contains about 49 different proteins and 3 molecules of RNA (25S, 5.8S and 5S).

The chain is Large ribosomal subunit protein uL16 (RPL10) from Nicotiana tabacum (Common tobacco).